The sequence spans 285 residues: Nucleotide-binding protein CD630_34000 (285 aa).

8-15 (GLSGSGKS) contributes to the ATP binding site. A GTP-binding site is contributed by 59-62 (DIRG).

The protein belongs to the RapZ-like family.

Displays ATPase and GTPase activities. The polypeptide is Nucleotide-binding protein CD630_34000 (Clostridioides difficile (strain 630) (Peptoclostridium difficile)).